The primary structure comprises 317 residues: Protoheme IX farnesyltransferase (317 aa).

9 helical membrane-spanning segments follow: residues 36–56 (VMVL…ATVN), 57–77 (PVIA…SGCL), 108–128 (LAFG…ASNW), 129–149 (LAAG…SMWL), 157–177 (IVIG…AVTG), 184–204 (LVLF…LALV), 230–247 (IIWY…PVWL), 251–273 (GWLY…VQVY), and 284–304 (AAMG…SALL).

It belongs to the UbiA prenyltransferase family. Protoheme IX farnesyltransferase subfamily.

The protein resides in the cell inner membrane. It catalyses the reaction heme b + (2E,6E)-farnesyl diphosphate + H2O = Fe(II)-heme o + diphosphate. The protein operates within porphyrin-containing compound metabolism; heme O biosynthesis; heme O from protoheme: step 1/1. Its function is as follows. Converts heme B (protoheme IX) to heme O by substitution of the vinyl group on carbon 2 of heme B porphyrin ring with a hydroxyethyl farnesyl side group. This Methylorubrum extorquens (strain CM4 / NCIMB 13688) (Methylobacterium extorquens) protein is Protoheme IX farnesyltransferase.